The following is a 246-amino-acid chain: Phosphomannomutase 2 (246 aa).

An N-acetylalanine modification is found at Ala2. Asp12 acts as the Nucleophile in catalysis. Residues Asp12 and Asp14 each coordinate Mg(2+). Catalysis depends on Asp14, which acts as the Proton donor/acceptor. Residues Arg21, Arg123, Arg134, and Arg141 each coordinate alpha-D-mannose 1-phosphate. N6-acetyllysine is present on Lys149. Alpha-D-mannose 1-phosphate contacts are provided by Ser179 and Asp181. Residues Asp209, Phe221, Asp223, and Thr226 each contribute to the Mg(2+) site.

The protein belongs to the eukaryotic PMM family. Homodimer.

Its subcellular location is the cytoplasm. The catalysed reaction is alpha-D-mannose 1-phosphate = D-mannose 6-phosphate. Its pathway is nucleotide-sugar biosynthesis; GDP-alpha-D-mannose biosynthesis; alpha-D-mannose 1-phosphate from D-fructose 6-phosphate: step 2/2. In terms of biological role, involved in the synthesis of the GDP-mannose and dolichol-phosphate-mannose required for a number of critical mannosyl transfer reactions. The protein is Phosphomannomutase 2 (PMM2) of Macaca fascicularis (Crab-eating macaque).